Consider the following 421-residue polypeptide: Odorant receptor 67b (421 aa).

Over 1–48 (MQDQLDHELERIDKLPKLGLLWVEYSAYALGVNIAPRKRSSKYCRLTR) the chain is Cytoplasmic. A helical membrane pass occupies residues 49–69 (ILVLIVNLSIIYSLVAFIMEN). At 70–71 (YM) the chain is on the extracellular side. The chain crosses the membrane as a helical span at residues 72–92 (ISFETYVEAVLLTFQLSVGVV). At 93 to 151 (KMFHFQNKVESCSQLVFSTETGEVLKSLGLFQLDLPRKKELLSSVSLILLNNWMIIDRQ) the chain is on the cytoplasmic side. The chain crosses the membrane as a helical span at residues 152–172 (VMFFFKIVCMPVLYYCVRPYF). The Extracellular portion of the chain corresponds to 173-217 (QYIFDCYIKDKDTCEMTLTYPAIVPYLQLGNYEFPSYVIRFFLLQ). Residues 218–238 (SGPLWCFFAVFGFNSLFVVLT) traverse the membrane as a helical segment. Over 239 to 289 (RYESGLIKVLRFLVQNSTSDILVPKDQRVKYLQCCVRLFARISSHHNQIEN) the chain is Cytoplasmic. A helical transmembrane segment spans residues 290-310 (LFKYIILVQCSVSSILICMLL). The Extracellular portion of the chain corresponds to 311–315 (YKIST). A helical transmembrane segment spans residues 316–336 (VLEVGWVWMGMIMVYFVTIAL). Residues 337 to 384 (EITLYNVSAQKVESQSELLFHDWYNCSWYNESREFKFMIKMMLLFSRR) lie on the Cytoplasmic side of the membrane. Residues 385–405 (TFVLSVGGFTSLSHKFLVQVF) form a helical membrane-spanning segment. Over 406-421 (RLSANFFLLLRNMNNK) the chain is Extracellular.

The protein belongs to the insect chemoreceptor superfamily. Heteromeric odorant receptor channel (TC 1.A.69) family. Or63a subfamily. As to quaternary structure, interacts with Orco. Complexes exist early in the endomembrane system in olfactory sensory neurons (OSNs), coupling these complexes to the conserved ciliary trafficking pathway.

The protein localises to the cell membrane. Functionally, odorant receptor which mediates acceptance or avoidance behavior, depending on its substrates. The odorant receptor repertoire encodes a large collection of odor stimuli that vary widely in identity, intensity, and duration. May form a complex with Orco to form odorant-sensing units, providing sensitive and prolonged odorant signaling and calcium permeability. Involved in the behavioral responses to ethyl acetate, pentyl acetate, methyl caproate, anisole, heptanal, 2-heptanone, r-carvone, nonanoic acid, and pyrazines. The polypeptide is Odorant receptor 67b (Or67b) (Drosophila melanogaster (Fruit fly)).